Consider the following 835-residue polypeptide: Ribonucleoside-diphosphate reductase large subunit (835 aa).

Substrate-binding positions include S222, S237–C238, G266, N447–E451, and P660–S664. The cysteines at positions 238 and 464 are disulfide-linked. Residue N447 is the Proton acceptor of the active site. Catalysis depends on C449, which acts as the Cysteine radical intermediate. The active-site Proton acceptor is the E451.

It belongs to the ribonucleoside diphosphate reductase large chain family. In terms of assembly, heterotetramer composed of a homodimer of the large subunit (R1) and a homodimer of the small subunit (R2). Larger multisubunit protein complex are also active, composed of (R1)n(R2)n.

The catalysed reaction is a 2'-deoxyribonucleoside 5'-diphosphate + [thioredoxin]-disulfide + H2O = a ribonucleoside 5'-diphosphate + [thioredoxin]-dithiol. Ribonucleoside-diphosphate reductase holoenzyme provides the precursors necessary for viral DNA synthesis. Allows virus growth in non-dividing cells. Catalyzes the biosynthesis of deoxyribonucleotides from the corresponding ribonucleotides. The chain is Ribonucleoside-diphosphate reductase large subunit from Magallana gigas (Pacific oyster).